We begin with the raw amino-acid sequence, 160 residues long: Ribosomal RNA large subunit methyltransferase H (160 aa).

Residue Gly108 participates in S-adenosyl-L-methionine binding.

This sequence belongs to the RNA methyltransferase RlmH family. In terms of assembly, homodimer.

It is found in the cytoplasm. The catalysed reaction is pseudouridine(1915) in 23S rRNA + S-adenosyl-L-methionine = N(3)-methylpseudouridine(1915) in 23S rRNA + S-adenosyl-L-homocysteine + H(+). In terms of biological role, specifically methylates the pseudouridine at position 1915 (m3Psi1915) in 23S rRNA. The protein is Ribosomal RNA large subunit methyltransferase H of Rhodopseudomonas palustris (strain BisA53).